The following is a 142-amino-acid chain: Protein archease (142 aa).

Residues Asp-12, Asp-141, and Leu-142 each coordinate Ca(2+).

The protein belongs to the archease family.

In terms of biological role, activates the tRNA-splicing ligase complex by facilitating the enzymatic turnover of catalytic subunit RtcB. Acts by promoting the guanylylation of RtcB, a key intermediate step in tRNA ligation. Can also alter the NTP specificity of RtcB such that ATP, dGTP or ITP is used efficiently. This chain is Protein archease, found in Thermococcus gammatolerans (strain DSM 15229 / JCM 11827 / EJ3).